Consider the following 398-residue polypeptide: Diaminopropionate ammonia-lyase (398 aa).

Position 77 is an N6-(pyridoxal phosphate)lysine (lysine 77).

The protein belongs to the diaminopropionate ammonia-lyase family. As to quaternary structure, homodimer. Requires pyridoxal 5'-phosphate as cofactor.

It catalyses the reaction (S)-2,3-diaminopropanoate + H2O + H(+) = pyruvate + 2 NH4(+). The catalysed reaction is (R)-2,3-diaminopropanoate + H2O + H(+) = pyruvate + 2 NH4(+). In terms of biological role, catalyzes the alpha,beta-elimination reaction of both L- and D-alpha,beta-diaminopropionate (DAP) to form pyruvate and ammonia. The D-isomer of serine is degraded to pyruvate, though very poorly; other amino acids (L-serine, D- and L-threonine, D- and L-beta-Cl-alanine) are not substrates. In Escherichia coli O157:H7, this protein is Diaminopropionate ammonia-lyase (ygeX).